A 475-amino-acid chain; its full sequence is Ataxin-10 (475 aa).

Arginine 10 is subject to Omega-N-methylarginine. A phosphoserine mark is found at serine 12 and serine 77. Threonine 82 bears the Phosphothreonine mark. The residue at position 430 (serine 430) is a Phosphoserine.

It belongs to the ataxin-10 family. As to quaternary structure, homooligomer. Interacts with GNB2. Interacts with IQCB1. Interacts with OGT. In terms of processing, polyubiquitinated. Post-translationally, phosphorylation at Ser-12 by AURKB promotes the association of ATXN10 with PLK1. Phosphorylation at Ser-77 and Thr-82 by PLK1 may play a role in the regulation of cytokinesis and may stimulate the proteasome-mediated degradation of ATXN10.

Its subcellular location is the cytoplasm. The protein localises to the perinuclear region. It localises to the midbody. It is found in the cytoskeleton. The protein resides in the cilium basal body. Its subcellular location is the microtubule organizing center. The protein localises to the centrosome. It localises to the centriole. Functionally, may play a role in the regulation of cytokinesis. May play a role in signaling by stimulating protein glycosylation. Induces neuritogenesis by activating the Ras-MAP kinase pathway and is necessary for the survival of cerebellar neurons. Does not appear to play a major role in ciliogenesis. The polypeptide is Ataxin-10 (ATXN10) (Macaca fascicularis (Crab-eating macaque)).